Reading from the N-terminus, the 224-residue chain is Casparian strip membrane protein 1 (224 aa).

Residues 1 to 22 (MSSGEPAAVSIPIHDHHGKAPA) form a disordered region. The Cytoplasmic segment spans residues 1 to 62 (MSSGEPAAVS…RGDHHRGSRC (62 aa)). Residues 63–83 (LAFLDFILRIAAFGPALAAAI) form a helical membrane-spanning segment. At 84-110 (STGTSDETLSVFTEFYQFRARFDDFPA) the chain is on the extracellular side. A helical transmembrane segment spans residues 111-131 (FLFFLVANAIVAGYLVLSLPF). Over 132–145 (SAVLVIRPQTIGLR) the chain is Cytoplasmic. The chain crosses the membrane as a helical span at residues 146–166 (LLLLVCDMIMAAMLTAAASAA). Residues 167–200 (AAIVDLAHNGNLRANWVAICMQFHGFCQRTSGSV) lie on the Extracellular side of the membrane. A helical membrane pass occupies residues 201 to 221 (VASFLTVVILMFLVILAACSI). Residues 222–224 (RKR) lie on the Cytoplasmic side of the membrane.

This sequence belongs to the Casparian strip membrane proteins (CASP) family. Homodimer and heterodimers.

The protein localises to the cell membrane. In terms of biological role, regulates membrane-cell wall junctions and localized cell wall deposition. Required for establishment of the Casparian strip membrane domain (CSD) and the subsequent formation of Casparian strips, a cell wall modification of the root endodermis that determines an apoplastic barrier between the intraorganismal apoplasm and the extraorganismal apoplasm and prevents lateral diffusion. The protein is Casparian strip membrane protein 1 of Oryza sativa subsp. indica (Rice).